A 487-amino-acid polypeptide reads, in one-letter code: UDP-N-acetylmuramate--L-alanine ligase (487 aa).

Glycine 129–threonine 135 is an ATP binding site.

This sequence belongs to the MurCDEF family.

The protein resides in the cytoplasm. It catalyses the reaction UDP-N-acetyl-alpha-D-muramate + L-alanine + ATP = UDP-N-acetyl-alpha-D-muramoyl-L-alanine + ADP + phosphate + H(+). It functions in the pathway cell wall biogenesis; peptidoglycan biosynthesis. Cell wall formation. The sequence is that of UDP-N-acetylmuramate--L-alanine ligase from Aliivibrio salmonicida (strain LFI1238) (Vibrio salmonicida (strain LFI1238)).